The chain runs to 373 residues: Ubiquitin domain-containing protein DSK2 (373 aa).

A Ubiquitin-like domain is found at 1 to 76 (MSLNIHIKSG…SVHLVKSQPK (76 aa)). Glycyl lysine isopeptide (Lys-Gly) (interchain with G-Cter in ubiquitin) cross-links involve residues Lys-13 and Lys-76. The disordered stretch occupies residues 221 to 270 (DPNAGMGSAGGAASAFPAPGGDAPEEGSNTNTTSSSNTGNNAGTNAGTNA). Residues 231–270 (GAASAFPAPGGDAPEEGSNTNTTSSSNTGNNAGTNAGTNA) are compositionally biased toward low complexity. Residues 327–371 (PPEERYEHQLRQLNDMGFFDFDRNVAALRRSGGSVQGALDSLLNG) enclose the UBA domain.

The protein localises to the nucleus. Functionally, involved, with RAD23 in spindle pole body duplication. Involved in the ubiquitin-proteasome proteolytic pathway. The sequence is that of Ubiquitin domain-containing protein DSK2 (DSK2) from Saccharomyces cerevisiae (strain ATCC 204508 / S288c) (Baker's yeast).